We begin with the raw amino-acid sequence, 328 residues long: 2,4-dinitroanisole O-demethylase subunit alpha (328 aa).

Residues 1–9 (MSVTSQTSS) constitute a propeptide that is removed on maturation. Residues histidine 101, histidine 103, aspartate 105, histidine 168, histidine 225, and cysteine 247 each contribute to the Zn(2+) site.

It belongs to the metallo-beta-lactamase superfamily. Part of the complex DnhAB composed of the 2,4-dinitroanisole O-demethylase alpha (DnhA) and beta (DnhB) subunits. The cofactor is Zn(2+).

It carries out the reaction 2,4-dinitroanisole + H2O = 2,4-dinitrophenol + methanol + H(+). Involved in the degradation of 2,4-dinitroanisole (DNAN), an insensitive munition ingredient used in explosive formulations as a replacement for 2,4,6-trinitrotoluene (TNT). Catalyzes the removal of the methyl group from 2,4-dinitroanisole (DNAN) to yield 2,4-dinitrophenol (2,4-DNP) and methanol. This Nocardioides sp. (strain JS1661) protein is 2,4-dinitroanisole O-demethylase subunit alpha.